A 485-amino-acid chain; its full sequence is Noelin (485 aa).

A signal peptide spans 1–16 (MSVPLLKIGVVLSTMA). N-linked (GlcNAc...) asparagine glycans are attached at residues Asn33, Asn103, Asn187, Asn288, Asn307, Asn394, Asn431, and Asn473. The stretch at 87 to 225 (RDARTKQLRQ…ERLRACMQKL (139 aa)) forms a coiled coil. Residues 226–478 (ACGKLTGISD…QILYNVTLFH (253 aa)) enclose the Olfactomedin-like domain. Cys227 and Cys409 are joined by a disulfide.

Homotetramer; disulfide-linked. Dimer of dimers, giving rise to a V-shaped homotretramer. Isoform 1 and isoform 3 interact with RTN4R. Identified in a complex with RTN4R and LINGO1. Peripherally associated with AMPAR complex. AMPAR complex consists of an inner core made of 4 pore-forming GluA/GRIA proteins (GRIA1, GRIA2, GRIA3 and GRIA4) and 4 major auxiliary subunits arranged in a twofold symmetry. One of the two pairs of distinct binding sites is occupied either by CNIH2, CNIH3 or CACNG2, CACNG3. The other harbors CACNG2, CACNG3, CACNG4, CACNG8 or GSG1L. This inner core of AMPAR complex is complemented by outer core constituents binding directly to the GluA/GRIA proteins at sites distinct from the interaction sites of the inner core constituents. Outer core constituents include at least PRRT1, PRRT2, CKAMP44/SHISA9, FRRS1L and NRN1. The proteins of the inner and outer core serve as a platform for other, more peripherally associated AMPAR constituents, including OLFM1. Alone or in combination, these auxiliary subunits control the gating and pharmacology of the AMPAR complex and profoundly impact their biogenesis and protein processing. Interacts with OLFM2.

The protein resides in the secreted. The protein localises to the synapse. It localises to the endoplasmic reticulum. Its subcellular location is the cell projection. It is found in the axon. The protein resides in the perikaryon. Functionally, contributes to the regulation of axonal growth in the embryonic and adult central nervous system by inhibiting interactions between RTN4R and LINGO1. Inhibits RTN4R-mediated axon growth cone collapse. May play an important role in regulating the production of neural crest cells by the neural tube. May be required for normal responses to olfactory stimuli. The protein is Noelin (OLFM1) of Homo sapiens (Human).